The chain runs to 851 residues: Nucleolar RNA helicase 2 (851 aa).

The segment at 1 to 260 is disordered; that stretch reads MPGKLRSGAK…IPVEQKEGAF (260 aa). 2 positions are modified to phosphoserine: S7 and S13. 2 stretches are compositionally biased toward basic and acidic residues: residues 26–42 and 99–113; these read PSEKKTRKEKTKSKTEE and EPLEKQADSETKEII. K39 carries the N6-acetyllysine modification. Repeat copies occupy residues 117–153, 154–190, and 191–227. The tract at residues 117-227 is 3 X 37 AA tandem repeats; the sequence is PSEEEADMPK…SPRLKDGLSQ (111 aa). The residue at position 118 (S118) is a Phosphoserine. The span at 133–145 shows a compositional bias: basic and acidic residues; it reads GKEANGDAGEKSP. K134 bears the N6-acetyllysine mark. A phosphoserine mark is found at S144, S155, S181, S192, S218, S236, S243, S244, and S245. The segment covering 170–182 has biased composition (basic and acidic residues); that stretch reads GKEANGDAGEKSP. A compositionally biased stretch (basic and acidic residues) spans 207 to 223; the sequence is GKEASGDAGEKSPRLKD. A compositionally biased stretch (polar residues) spans 226–237; sequence SQPSEPKSNSSD. Residues 246 to 257 are compositionally biased toward basic and acidic residues; sequence ETEKEIPVEQKE. The Q motif motif lies at 258–286; sequence GAFSNFPISEETVKLLKARGVNFLFPIQA. Residues 289 to 468 enclose the Helicase ATP-binding domain; the sequence is FHHVYSGKDL…KKYMKSTYEQ (180 aa). 302–309 serves as a coordination point for ATP; the sequence is ARTGTGKT. T368 bears the Phosphothreonine mark. Residues 411 to 414 carry the DEAD box motif; it reads DEVD. Residues 501-645 form the Helicase C-terminal domain; sequence DVIRVYSGHQ…GVPSATEIIK (145 aa). A Phosphoserine modification is found at S639. K672 carries the post-translational modification N6-acetyllysine. The disordered stretch occupies residues 783–851; it reads QPELEGPPDG…KRSFSKAFGQ (69 aa). 3 consecutive repeat copies span residues 807–811, 817–823, and 829–833. Residues 807 to 833 form a 3 X 5 AA repeats region; sequence FRGQRGGSRNFRGQGQRGGSRNFRGQR. K847 carries the N6-acetyllysine modification.

This sequence belongs to the DEAD box helicase family. DDX21/DDX50 subfamily. In terms of assembly, homodimer; homodimerizes via its N-terminus. Found in a multi-helicase-TICAM1 complex at least composed of DHX36, DDX1, DDX21 and TICAM1; this complex exists in resting cells with or without poly(I:C) RNA ligand stimulation. Interacts (via C-terminus) with TICAM1 (via TIR domain). Interacts with DHX36 (via C-terminus); this interaction serves as bridges to TICAM1. Interacts (via C-terminus) with DDX1 (via B30.2/SPRY domain); this interaction serves as bridges to TICAM1. Component of the B-WICH complex, at least composed of SMARCA5/SNF2H, BAZ1B/WSTF, SF3B1, DEK, MYO1C, ERCC6, MYBBP1A and DDX21. Interacts with C1QBP. Interacts with JUN. Interacts with WDR46. Interacts with MCM3AP. Interacts with WDR43. Interacts with KPNA3. Interacts with GID4. Acetylation by CREBBP/CBP inhibits the helicase activity. Deacetylation by SIRT7 promotes the helicase activity and overcomes R-loop-mediated stalling of RNA polymerases. As to expression, highly expressed in liver and testis. Expressed at lower level in brain, lungs, and skeletal muscle.

The protein localises to the nucleus. The protein resides in the nucleolus. Its subcellular location is the nucleoplasm. It localises to the cytoplasm. It is found in the cytosol. The protein localises to the mitochondrion. The catalysed reaction is ATP + H2O = ADP + phosphate + H(+). With respect to regulation, acetylation inhibits the helicase activity. Functionally, RNA helicase that acts as a sensor of the transcriptional status of both RNA polymerase (Pol) I and II: promotes ribosomal RNA (rRNA) processing and transcription from polymerase II (Pol II). Binds various RNAs, such as rRNAs, snoRNAs, 7SK and, at lower extent, mRNAs. In the nucleolus, localizes to rDNA locus, where it directly binds rRNAs and snoRNAs, and promotes rRNA transcription, processing and modification. Required for rRNA 2'-O-methylation, possibly by promoting the recruitment of late-acting snoRNAs SNORD56 and SNORD58 with pre-ribosomal complexes. In the nucleoplasm, binds 7SK RNA and is recruited to the promoters of Pol II-transcribed genes: acts by facilitating the release of P-TEFb from inhibitory 7SK snRNP in a manner that is dependent on its helicase activity, thereby promoting transcription of its target genes. Functions as cofactor for JUN-activated transcription: required for phosphorylation of JUN at 'Ser-77'. Can unwind double-stranded RNA (helicase) and can fold or introduce a secondary structure to a single-stranded RNA (foldase). Together with SIRT7, required to prevent R-loop-associated DNA damage and transcription-associated genomic instability: deacetylation by SIRT7 activates the helicase activity, thereby overcoming R-loop-mediated stalling of RNA polymerases. Involved in rRNA processing. May bind to specific miRNA hairpins. Component of a multi-helicase-TICAM1 complex that acts as a cytoplasmic sensor of viral double-stranded RNA (dsRNA) and plays a role in the activation of a cascade of antiviral responses including the induction of pro-inflammatory cytokines via the adapter molecule TICAM1. The chain is Nucleolar RNA helicase 2 (Ddx21) from Mus musculus (Mouse).